The sequence spans 471 residues: Ribulose bisphosphate carboxylase large chain (471 aa).

Residue lysine 5 is modified to N6,N6,N6-trimethyllysine. Substrate-binding residues include asparagine 114 and threonine 164. Lysine 166 functions as the Proton acceptor in the catalytic mechanism. Lysine 168 is a substrate binding site. Positions 192, 194, and 195 each coordinate Mg(2+). N6-carboxylysine is present on lysine 192. Histidine 285 (proton acceptor) is an active-site residue. Positions 286, 318, and 370 each coordinate substrate.

It belongs to the RuBisCO large chain family. Type I subfamily. As to quaternary structure, heterohexadecamer of 8 large chains and 8 small chains; disulfide-linked. The disulfide link is formed within the large subunit homodimers. Mg(2+) serves as cofactor. In terms of processing, the disulfide bond which can form in the large chain dimeric partners within the hexadecamer appears to be associated with oxidative stress and protein turnover.

The protein localises to the plastid. It is found in the chloroplast. It carries out the reaction 2 (2R)-3-phosphoglycerate + 2 H(+) = D-ribulose 1,5-bisphosphate + CO2 + H2O. The enzyme catalyses D-ribulose 1,5-bisphosphate + O2 = 2-phosphoglycolate + (2R)-3-phosphoglycerate + 2 H(+). Functionally, ruBisCO catalyzes two reactions: the carboxylation of D-ribulose 1,5-bisphosphate, the primary event in carbon dioxide fixation, as well as the oxidative fragmentation of the pentose substrate in the photorespiration process. Both reactions occur simultaneously and in competition at the same active site. In Schlumbergera truncata (Thanksgiving cactus), this protein is Ribulose bisphosphate carboxylase large chain.